Here is a 284-residue protein sequence, read N- to C-terminus: 2-dehydro-3-deoxyphosphooctonate aldolase (284 aa).

This sequence belongs to the KdsA family.

The protein resides in the cytoplasm. It catalyses the reaction D-arabinose 5-phosphate + phosphoenolpyruvate + H2O = 3-deoxy-alpha-D-manno-2-octulosonate-8-phosphate + phosphate. Its pathway is carbohydrate biosynthesis; 3-deoxy-D-manno-octulosonate biosynthesis; 3-deoxy-D-manno-octulosonate from D-ribulose 5-phosphate: step 2/3. The protein operates within bacterial outer membrane biogenesis; lipopolysaccharide biosynthesis. This is 2-dehydro-3-deoxyphosphooctonate aldolase from Burkholderia cenocepacia (strain HI2424).